The chain runs to 272 residues: Acidic leucine-rich nuclear phosphoprotein 32 family member B (272 aa).

LRR repeat units follow at residues 18–38 (AVRELVLDNCKAMDGKIEGLT), 43–64 (NLEFLSLISVGLFSVSDLPKLP), 65–87 (KLKKLELSENRIFGGLDRLAEEL), and 89–110 (SLTHLNLSGNNLKDISTLEPLK). One can recognise an LRRCT domain in the interval 123 to 161 (CEVTNRSDYRETVFRLLPQLSYLDGYDREDQEAPDSDVE). The span at 149-254 (DREDQEAPDS…DEDEDEEEEE (106 aa)) shows a compositional bias: acidic residues. The interval 149–272 (DREDQEAPDS…RETDDEGEDD (124 aa)) is disordered. A phosphoserine mark is found at Ser164 and Ser171. Residues 255–265 (SGKGEKRKRET) are compositionally biased toward basic and acidic residues. Residues 260–263 (KRKR) carry the Nuclear localization signal motif. At Thr265 the chain carries Phosphothreonine.

It belongs to the ANP32 family. As to quaternary structure, interacts with histones H3 and H4. Interacts with KLF5; this interaction induces promoter region-specific histone incorporation and inhibition of histone acetylation by ANP32B. Post-translationally, some glutamate residues are glycylated by TTLL8. This modification occurs exclusively on glutamate residues and results in a glycine chain on the gamma-carboxyl group. In terms of processing, directly cleaved by caspase-3/CASP3.

The protein resides in the nucleus. Functionally, multifunctional protein that is involved in the regulation of many processes including cell proliferation, apoptosis, cell cycle progression or transcription. Regulates the proliferation of neuronal stem cells, differentiation of leukemic cells and progression from G1 to S phase of the cell cycle. As negative regulator of caspase-3-dependent apoptosis, may act as an antagonist of ANP32A in regulating tissue homeostasis. Exhibits histone chaperone properties, able to recruit histones to certain promoters, thus regulating the transcription of specific genes. Also plays an essential role in the nucleocytoplasmic transport of specific mRNAs via the uncommon nuclear mRNA export receptor XPO1/CRM1. Participates in the regulation of adequate adaptive immune responses by acting on mRNA expression and cell proliferation. The sequence is that of Acidic leucine-rich nuclear phosphoprotein 32 family member B (Anp32b) from Mus musculus (Mouse).